Reading from the N-terminus, the 1444-residue chain is Rho GTPase-activating protein 31 (1444 aa).

Positions 21 to 216 (CDLTEYLESS…FILNHVDQIF (196 aa)) constitute a Rho-GAP domain. Position 272 is a phosphoserine (Ser-272). Thr-286 bears the Phosphothreonine mark. Phosphoserine is present on residues Ser-346, Ser-349, and Ser-387. The tract at residues 398–427 (WGQEGMPPGAEGGFDVSSDRSHLQGAQARP) is disordered. Position 476 is a phosphoserine (Ser-476). Residues 504–631 (TNSTPCRTPP…ESSTLQESPR (128 aa)) are disordered. The segment covering 515–534 (ELQSLSSLEEFSFHGSESGG) has biased composition (low complexity). Basic and acidic residues predominate over residues 600–619 (NELEKRPNPEKVVEEGREAG). At Thr-679 the chain carries Phosphothreonine. Disordered stretches follow at residues 688–893 (SSLG…EDDT) and 906–1108 (EPWE…SSLN). 2 positions are modified to phosphoserine: Ser-701 and Ser-712. Positions 722–734 (PANQSTQGASTAA) are enriched in polar residues. The segment covering 735 to 745 (SREKPEPEQGL) has biased composition (basic and acidic residues). Pro residues predominate over residues 777 to 790 (LSPPLPPAPPPPTP). Position 778 is a phosphoserine (Ser-778). Thr-789 carries the post-translational modification Phosphothreonine. The span at 803–817 (GPEREDSSRKLRTDL) shows a compositional bias: basic and acidic residues. The span at 822 to 834 (LKSQDSPEISSLC) shows a compositional bias: polar residues. Residues 839-848 (ATPRHSDKQN) show a composition bias toward basic and acidic residues. The span at 960–977 (TVKSQWTLEVPSSSSCAN) shows a compositional bias: polar residues. The residue at position 974 (Ser-974) is a Phosphoserine. The segment covering 992–1008 (PRREITGWDEKALRSFR) has biased composition (basic and acidic residues). The segment covering 1028 to 1038 (VQPNPAETSPI) has biased composition (polar residues). The span at 1064-1075 (GPESSKESSPSV) shows a compositional bias: low complexity. Phosphoserine occurs at positions 1105, 1106, and 1178. Composition is skewed to polar residues over residues 1211 to 1224 (QIPQ…SGEN) and 1234 to 1245 (EGPSSTSGTTQK). The disordered stretch occupies residues 1211–1346 (QIPQPLPSQS…HRSRPGRPQS (136 aa)). The segment covering 1246–1265 (PAKDDSPSSLESSKEEKPKQ) has biased composition (basic and acidic residues). Composition is skewed to polar residues over residues 1292-1303 (PGSSNLLSTQDA) and 1314-1323 (TEPSGDNLLS).

As to quaternary structure, interacts with ITSN1, which inhibits GAP activity. Interacts with PARVA. Interacts with GTP-loaded RHOU. In terms of processing, phosphorylation on Thr-789 reduces GAP activity.

Its subcellular location is the cell projection. The protein localises to the lamellipodium. It localises to the cell junction. It is found in the focal adhesion. In terms of biological role, functions as a GTPase-activating protein (GAP) for RAC1 and CDC42. Required for cell spreading, polarized lamellipodia formation and cell migration. This is Rho GTPase-activating protein 31 (ARHGAP31) from Homo sapiens (Human).